Consider the following 134-residue polypeptide: 6,7-dimethyl-8-ribityllumazine synthase (134 aa).

5-amino-6-(D-ribitylamino)uracil contacts are provided by residues Phe11, 43 to 45 (AYD), and 67 to 69 (AIV). Residue 72 to 73 (DT) coordinates (2S)-2-hydroxy-3-oxobutyl phosphate. The active-site Proton donor is His75. Position 100 (Phe100) interacts with 5-amino-6-(D-ribitylamino)uracil. Arg115 is a (2S)-2-hydroxy-3-oxobutyl phosphate binding site.

Belongs to the DMRL synthase family.

The catalysed reaction is (2S)-2-hydroxy-3-oxobutyl phosphate + 5-amino-6-(D-ribitylamino)uracil = 6,7-dimethyl-8-(1-D-ribityl)lumazine + phosphate + 2 H2O + H(+). It participates in cofactor biosynthesis; riboflavin biosynthesis; riboflavin from 2-hydroxy-3-oxobutyl phosphate and 5-amino-6-(D-ribitylamino)uracil: step 1/2. Functionally, catalyzes the formation of 6,7-dimethyl-8-ribityllumazine by condensation of 5-amino-6-(D-ribitylamino)uracil with 3,4-dihydroxy-2-butanone 4-phosphate. This is the penultimate step in the biosynthesis of riboflavin. The chain is 6,7-dimethyl-8-ribityllumazine synthase from Halorubrum lacusprofundi (strain ATCC 49239 / DSM 5036 / JCM 8891 / ACAM 34).